A 321-amino-acid polypeptide reads, in one-letter code: Phospho-N-acetylmuramoyl-pentapeptide-transferase (321 aa).

10 consecutive transmembrane segments (helical) span residues Met1–Ile21, Met50–Ile70, Ile76–Ile96, Phe112–Thr132, Ile140–Trp160, Gly173–Ala193, Ala198–Phe218, Val225–Met245, Leu250–Val270, and Val300–Val320.

It belongs to the glycosyltransferase 4 family. MraY subfamily. Requires Mg(2+) as cofactor.

The protein resides in the cell membrane. It catalyses the reaction UDP-N-acetyl-alpha-D-muramoyl-L-alanyl-gamma-D-glutamyl-L-lysyl-D-alanyl-D-alanine + di-trans,octa-cis-undecaprenyl phosphate = Mur2Ac(oyl-L-Ala-gamma-D-Glu-L-Lys-D-Ala-D-Ala)-di-trans,octa-cis-undecaprenyl diphosphate + UMP. It functions in the pathway cell wall biogenesis; peptidoglycan biosynthesis. Its function is as follows. Catalyzes the initial step of the lipid cycle reactions in the biosynthesis of the cell wall peptidoglycan: transfers peptidoglycan precursor phospho-MurNAc-pentapeptide from UDP-MurNAc-pentapeptide onto the lipid carrier undecaprenyl phosphate, yielding undecaprenyl-pyrophosphoryl-MurNAc-pentapeptide, known as lipid I. The protein is Phospho-N-acetylmuramoyl-pentapeptide-transferase of Staphylococcus saprophyticus subsp. saprophyticus (strain ATCC 15305 / DSM 20229 / NCIMB 8711 / NCTC 7292 / S-41).